We begin with the raw amino-acid sequence, 342 residues long: Trans-3-hydroxy-L-proline dehydratase (342 aa).

Serine 90 serves as the catalytic Proton acceptor. Residues 91 to 92 (GS), aspartate 251, and 256 to 257 (GT) contribute to the substrate site.

It belongs to the proline racemase family.

It catalyses the reaction trans-3-hydroxy-L-proline = 1-pyrroline-2-carboxylate + H2O. Its function is as follows. Catalyzes the dehydration of trans-3-hydroxy-L-proline (t3LHyp) to Delta(1)-pyrroline-2-carboxylate (Pyr2C). Is likely involved in a degradation pathway that converts t3LHyp to L-proline, which would allow P.denitrificans to grow on t3LHyp as a sole carbon source. Displays neither proline racemase activity nor 4-hydroxyproline 2-epimerase activity. This chain is Trans-3-hydroxy-L-proline dehydratase, found in Paracoccus denitrificans (strain Pd 1222).